We begin with the raw amino-acid sequence, 842 residues long: Oleate activated transcription factor 3 (842 aa).

The segment at residues 22-50 (CTNCKRRKSKCDRQNPCSNCVRFGNKDTC) is a DNA-binding region (zn(2)-C6 fungal-type). Residues 55-101 (NPKNTESQHGEDTDNKVKKQQPQMIKGKRNGTSSSIVGSKASSISPT) are disordered. Over residues 60–71 (ESQHGEDTDNKV) the composition is skewed to basic and acidic residues. Residues 87–99 (SSSIVGSKASSIS) show a composition bias toward low complexity.

This sequence belongs to the OAF3 family.

Its subcellular location is the cytoplasm. It localises to the nucleus. The protein localises to the mitochondrion. Transcriptional inhibitor with a significantly increased number of target genes in response to oleate. This chain is Oleate activated transcription factor 3 (OAF3), found in Zygosaccharomyces rouxii (strain ATCC 2623 / CBS 732 / NBRC 1130 / NCYC 568 / NRRL Y-229).